We begin with the raw amino-acid sequence, 155 residues long: Ribosome maturation factor RimP (155 aa).

This sequence belongs to the RimP family.

It localises to the cytoplasm. Functionally, required for maturation of 30S ribosomal subunits. The protein is Ribosome maturation factor RimP of Staphylococcus carnosus (strain TM300).